We begin with the raw amino-acid sequence, 506 residues long: Maturase K (506 aa).

The protein belongs to the intron maturase 2 family. MatK subfamily.

The protein resides in the plastid. Its subcellular location is the chloroplast. Usually encoded in the trnK tRNA gene intron. Probably assists in splicing its own and other chloroplast group II introns. The sequence is that of Maturase K from Artanema fimbriatum.